We begin with the raw amino-acid sequence, 353 residues long: 3-isopropylmalate dehydrogenase (353 aa).

The substrate site is built by Arg97, Arg107, Arg135, and Asp219. Mg(2+) is bound by residues Asp219, Asp243, and Asp247.

The protein belongs to the isocitrate and isopropylmalate dehydrogenases family. LeuB type 1 subfamily. As to quaternary structure, homodimer. The cofactor is Mg(2+). Mn(2+) is required as a cofactor.

Its subcellular location is the cytoplasm. It carries out the reaction (2R,3S)-3-isopropylmalate + NAD(+) = 4-methyl-2-oxopentanoate + CO2 + NADH. Its pathway is amino-acid biosynthesis; L-leucine biosynthesis; L-leucine from 3-methyl-2-oxobutanoate: step 3/4. Functionally, catalyzes the oxidation of 3-carboxy-2-hydroxy-4-methylpentanoate (3-isopropylmalate) to 3-carboxy-4-methyl-2-oxopentanoate. The product decarboxylates to 4-methyl-2 oxopentanoate. This is 3-isopropylmalate dehydrogenase from Bacteroides fragilis (strain ATCC 25285 / DSM 2151 / CCUG 4856 / JCM 11019 / LMG 10263 / NCTC 9343 / Onslow / VPI 2553 / EN-2).